The chain runs to 163 residues: Large ribosomal subunit protein uL15 (163 aa).

The span at 27-37 (SGLGKTAGRGQ) shows a compositional bias: gly residues. The segment at 27 to 46 (SGLGKTAGRGQKGQKSRSGV) is disordered.

It belongs to the universal ribosomal protein uL15 family. In terms of assembly, part of the 50S ribosomal subunit.

Its function is as follows. Binds to the 23S rRNA. In Zymomonas mobilis subsp. mobilis (strain ATCC 31821 / ZM4 / CP4), this protein is Large ribosomal subunit protein uL15.